We begin with the raw amino-acid sequence, 366 residues long: A-type ATP synthase subunit C (366 aa).

It belongs to the V-ATPase V0D/AC39 subunit family. In terms of assembly, has multiple subunits with at least A(3), B(3), C, D, E, F, H, I and proteolipid K(x).

Its subcellular location is the cell membrane. Component of the A-type ATP synthase that produces ATP from ADP in the presence of a proton gradient across the membrane. The protein is A-type ATP synthase subunit C of Thermococcus gammatolerans (strain DSM 15229 / JCM 11827 / EJ3).